Here is a 99-residue protein sequence, read N- to C-terminus: MFEQKISSEALTTTTSIPATGQITQRPLRDSVRQAVSGYVAQLNGQDPTELYELVLSEVEAPLLDIIMQYTRGNQTRAATMLGINRGTLRKKLKKYGMG.

The disordered stretch occupies residues Met1–Gln25. Positions Gln75–Lys94 form a DNA-binding region, H-T-H motif.

It belongs to the transcriptional regulatory Fis family. Homodimer.

In terms of biological role, activates ribosomal RNA transcription. Plays a direct role in upstream activation of rRNA promoters. The polypeptide is DNA-binding protein Fis (Psychromonas ingrahamii (strain DSM 17664 / CCUG 51855 / 37)).